Reading from the N-terminus, the 877-residue chain is DNA polymerase I (877 aa).

In terms of domain architecture, 5'-3' exonuclease spans 180–270; sequence TPAQFIDLKA…EIGLDDTLLK (91 aa). The region spanning 308–468 is the 3'-5' exonuclease domain; sequence DEIDFEIVTD…AKEKMMAELL (161 aa).

This sequence belongs to the DNA polymerase type-A family. As to quaternary structure, single-chain monomer with multiple functions.

The catalysed reaction is DNA(n) + a 2'-deoxyribonucleoside 5'-triphosphate = DNA(n+1) + diphosphate. In terms of biological role, in addition to polymerase activity, this DNA polymerase exhibits 3'-5' and 5'-3' exonuclease activity. The sequence is that of DNA polymerase I (polA) from Lactococcus lactis subsp. lactis (strain IL1403) (Streptococcus lactis).